The following is a 644-amino-acid chain: uncharacterized protein (644 aa).

Gly-254–Ser-261 is a binding site for ATP.

This is an uncharacterized protein from Bacillus anthracis.